A 547-amino-acid chain; its full sequence is Chaperonin GroEL (547 aa).

ATP-binding positions include 30 to 33 (TLGP), K51, 87 to 91 (DGTTT), G415, 479 to 481 (NAA), and D495.

Belongs to the chaperonin (HSP60) family. Forms a cylinder of 14 subunits composed of two heptameric rings stacked back-to-back. Interacts with the co-chaperonin GroES.

The protein localises to the cytoplasm. The catalysed reaction is ATP + H2O + a folded polypeptide = ADP + phosphate + an unfolded polypeptide.. Its function is as follows. Together with its co-chaperonin GroES, plays an essential role in assisting protein folding. The GroEL-GroES system forms a nano-cage that allows encapsulation of the non-native substrate proteins and provides a physical environment optimized to promote and accelerate protein folding. The protein is Chaperonin GroEL of Marinomonas sp. (strain MWYL1).